The following is a 1111-amino-acid chain: MSSNTSRSCSTRSRQNSRVSSQVLVDAKLHGNFEESERLFDYSASINLNMPSSSCEIPSSAVSTYLQKIQRGMLIQPFGCLIVVDEKNLKVIAFSENTQEMLGLIPHTVPSMEQREALTIGTDVKSLFLSPGCSALEKAVDFGEISILNPITLHCRSSSKPFYAILHRIEEGLVIDLEPVSPDEVPVTAAGALRSYKLAAKSISRLQALPSGNMLLLCDALVKEVSELTGYDRVMVYKFHEDGHGEVIAECCREDMEPYLGLHYSATDIPQASRFLFMRNKVRMICDCSAVPVKVVQDKSLSQPISLSGSTLRAPHGCHAQYMSNMGSVASLVMSVTINGSDSDEMNRDLQTGRHLWGLVVCHHASPRFVPFPLRYACEFLTQVFGVQINKEAESAVLLKEKRILQTQSVLCDMLFRNAPIGIVTQSPNIMDLVKCDGAALYYRDNLWSLGVTPTETQIRDLIDWVLKSHGGNTGFTTESLMESGYPDASVLGESICGMAAVYISEKDFLFWFRSSTAKQIKWGGARHDPNDRDGKRMHPRSSFKAFMEIVRWKSVPWDDMEMDAINSLQLIIKGSLQEEHSKTVVDVPLVDNRVQKVDELCVIVNEMVRLIDTAAVPIFAVDASGVINGWNSKAAEVTGLAVEQAIGKPVSDLVEDDSVETVKNMLALALEGSEERGAEIRIRAFGPKRKSSPVELVVNTCCSRDMTNNVLGVCFIGQDVTGQKTLTENYSRVKGDYARIMWSPSTLIPPIFITNENGVCSEWNNAMQKLSGIKREEVVNKILLGEVFTTDDYGCCLKDHDTLTKLRIGFNAVISGQKNIEKLLFGFYHRDGSFIEALLSANKRTDIEGKVTGVLCFLQVPSPELQYALQVQQISEHAIACALNKLAYLRHEVKDPEKAISFLQDLLHSSGLSEDQKRLLRTSVLCREQLAKVISDSDIEGIEEGYVELDCSEFGLQESLEAVVKQVMELSIERKVQISCDYPQEVSSMRLYGDNLRLQQILSETLLSSIRFTPALRGLCVSFKVIARIEAIGKRMKRVELEFRIIHPAPGLPEDLVREMFQPLRKGTSREGLGLHITQKLVKLMERGTLRYLRESEMSAFVILTEFPLI.

Residues 213-393 enclose the GAF domain; that stretch reads NMLLLCDALV…VFGVQINKEA (181 aa). A phytochromobilin-binding site is contributed by cysteine 318. 2 consecutive PAS domains span residues 604–674 and 737–808; these read IVNE…LEGS and DYAR…TKLR. In terms of domain architecture, Histidine kinase spans 889–1111; it reads YLRHEVKDPE…FVILTEFPLI (223 aa).

The protein belongs to the phytochrome family. In terms of assembly, homodimer. In terms of processing, contains one covalently linked phytochromobilin chromophore.

Its function is as follows. Regulatory photoreceptor which exists in two forms that are reversibly interconvertible by light: the Pr form that absorbs maximally in the red region of the spectrum and the Pfr form that absorbs maximally in the far-red region. Photoconversion of Pr to Pfr induces an array of morphogenic responses, whereas reconversion of Pfr to Pr cancels the induction of those responses. Pfr controls the expression of a number of nuclear genes including those encoding the small subunit of ribulose-bisphosphate carboxylase, chlorophyll A/B binding protein, protochlorophyllide reductase, rRNA, etc. It also controls the expression of its own gene(s) in a negative feedback fashion. This is Phytochrome C (PHYC) from Arabidopsis thaliana (Mouse-ear cress).